The following is a 697-amino-acid chain: Glycine--tRNA ligase beta subunit (697 aa).

Belongs to the class-II aminoacyl-tRNA synthetase family. As to quaternary structure, tetramer of two alpha and two beta subunits.

It is found in the cytoplasm. It carries out the reaction tRNA(Gly) + glycine + ATP = glycyl-tRNA(Gly) + AMP + diphosphate. The polypeptide is Glycine--tRNA ligase beta subunit (Cereibacter sphaeroides (strain ATCC 17023 / DSM 158 / JCM 6121 / CCUG 31486 / LMG 2827 / NBRC 12203 / NCIMB 8253 / ATH 2.4.1.) (Rhodobacter sphaeroides)).